A 218-amino-acid polypeptide reads, in one-letter code: Cytochrome b6 (218 aa).

A helical transmembrane segment spans residues Ile-35–Phe-55. Cys-38 contacts heme c. Positions 89 and 103 each coordinate heme b. Helical transmembrane passes span Ala-93–Phe-113, Leu-119–Tyr-139, and Leu-189–Ile-209. Heme b is bound by residues His-190 and His-205.

It belongs to the cytochrome b family. PetB subfamily. As to quaternary structure, the 4 large subunits of the cytochrome b6-f complex are cytochrome b6, subunit IV (17 kDa polypeptide, PetD), cytochrome f and the Rieske protein, while the 4 small subunits are PetG, PetL, PetM and PetN. The complex functions as a dimer. The cofactor is heme b. Requires heme c as cofactor.

It is found in the cellular thylakoid membrane. Component of the cytochrome b6-f complex, which mediates electron transfer between photosystem II (PSII) and photosystem I (PSI), cyclic electron flow around PSI, and state transitions. This chain is Cytochrome b6, found in Prochlorococcus marinus subsp. pastoris (strain CCMP1986 / NIES-2087 / MED4).